A 573-amino-acid chain; its full sequence is DEAD-box ATP-dependent RNA helicase 47B (573 aa).

The Q motif signature appears at 131 to 159 (KSFEELGLPPLLIDRLNKEGLSTPTEVQS). Positions 162–362 (IPIISQKHDA…RSWGHDPVLV (201 aa)) constitute a Helicase ATP-binding domain. 175 to 182 (SYTGSGKT) contributes to the ATP binding site. The short motif at 293-296 (DEVD) is the DEAD box element. The Helicase C-terminal domain occupies 421–565 (TLRRCIHALE…PCEFTEGKLL (145 aa)).

This sequence belongs to the DEAD box helicase family.

It carries out the reaction ATP + H2O = ADP + phosphate + H(+). This Oryza sativa subsp. japonica (Rice) protein is DEAD-box ATP-dependent RNA helicase 47B.